Reading from the N-terminus, the 258-residue chain is Imidazole glycerol phosphate synthase subunit HisF (258 aa).

Active-site residues include Asp11 and Asp130.

It belongs to the HisA/HisF family. In terms of assembly, heterodimer of HisH and HisF.

Its subcellular location is the cytoplasm. It catalyses the reaction 5-[(5-phospho-1-deoxy-D-ribulos-1-ylimino)methylamino]-1-(5-phospho-beta-D-ribosyl)imidazole-4-carboxamide + L-glutamine = D-erythro-1-(imidazol-4-yl)glycerol 3-phosphate + 5-amino-1-(5-phospho-beta-D-ribosyl)imidazole-4-carboxamide + L-glutamate + H(+). It functions in the pathway amino-acid biosynthesis; L-histidine biosynthesis; L-histidine from 5-phospho-alpha-D-ribose 1-diphosphate: step 5/9. Functionally, IGPS catalyzes the conversion of PRFAR and glutamine to IGP, AICAR and glutamate. The HisF subunit catalyzes the cyclization activity that produces IGP and AICAR from PRFAR using the ammonia provided by the HisH subunit. This is Imidazole glycerol phosphate synthase subunit HisF from Prochlorococcus marinus (strain MIT 9211).